A 474-amino-acid chain; its full sequence is Dihydrolipoyl dehydrogenase (474 aa).

FAD is bound by residues 36–45, K54, and G117; that span reads ERYNTLGGVC. A disulfide bond links C45 and C50. NAD(+)-binding positions include 182–186 and E205; that span reads GGGII. K220 carries the post-translational modification N6-acetyllysine. Residues V238 and 270 to 273 each bind NAD(+); that span reads AIGR. FAD-binding residues include D313 and A321. H445 (proton acceptor) is an active-site residue.

This sequence belongs to the class-I pyridine nucleotide-disulfide oxidoreductase family. As to quaternary structure, homodimer. FAD serves as cofactor.

Its subcellular location is the cytoplasm. It carries out the reaction N(6)-[(R)-dihydrolipoyl]-L-lysyl-[protein] + NAD(+) = N(6)-[(R)-lipoyl]-L-lysyl-[protein] + NADH + H(+). In terms of biological role, lipoamide dehydrogenase is a component of the glycine cleavage system as well as of the alpha-ketoacid dehydrogenase complexes. This chain is Dihydrolipoyl dehydrogenase (lpdA), found in Shigella flexneri.